Consider the following 381-residue polypeptide: Ceramide-binding protein svf-1 (381 aa).

Residues 1 to 18 form a peripherally associates with membranes region; it reads MFKWAQAALANVAGTKEP.

Belongs to the SVF1 family.

The protein localises to the golgi apparatus. Its subcellular location is the cis-Golgi network membrane. It is found in the endoplasmic reticulum membrane. It localises to the cytoplasm. The protein resides in the nucleus. Ceramide-binding protein that may transfer ceramides from the endoplasmic reticulum membrane to the cis-Golgi network membrane, and is thereby required for the biosynthesis of complex sphingolipids. The chain is Ceramide-binding protein svf-1 (svf-1) from Neurospora crassa (strain ATCC 24698 / 74-OR23-1A / CBS 708.71 / DSM 1257 / FGSC 987).